The sequence spans 419 residues: Transcription termination factor Rho (419 aa).

Positions 48–123 (DIFGDGVLEI…LKVNKVNYDK (76 aa)) constitute a Rho RNA-BD domain. RNA-binding regions lie at residues 61-66 (GFGFLR), 78-80 (DIY), and 108-110 (ERY). ATP-binding positions include 169–174 (GRGQRG), 181–186 (KAGKTM), and Arg-212. The segment at 284–288 (VLTGG) is RNA-binding 2.

Belongs to the Rho family. In terms of assembly, homohexamer. The homohexamer assembles into an open ring structure.

Functionally, facilitates transcription termination by a mechanism that involves Rho binding to the nascent RNA, activation of Rho's RNA-dependent ATPase activity, and release of the mRNA from the DNA template. The polypeptide is Transcription termination factor Rho (Buchnera aphidicola subsp. Baizongia pistaciae (strain Bp)).